The primary structure comprises 560 residues: Protein tweety homolog 3 (560 aa).

The Extracellular segment spans residues 1–43 (MAAVVNYSPPWWVNLFHRLPHFNLQFQQTSSDFRPDDSDYQKA). The helical transmembrane segment at 44–64 (VLLLGAAALVCLALDLLFLLF) threads the bilayer. At 65 to 87 (YSFWLCCCRRKNHDSPNADCCCT) the chain is on the cytoplasmic side. A helical membrane pass occupies residues 88-108 (AWCVIIATLVCSAGIAVGFYG). The Extracellular segment spans residues 109-212 (NGETCDGVTR…TEQYDWYRWL (104 aa)). Ca(2+) is bound by residues E111 and D114. 2 N-linked (GlcNAc...) asparagine glycosylation sites follow: N127 and N145. The helical transmembrane segment at 213–233 (GYLGLLLFDVIICLLVLVGLI) threads the bilayer. Residues 234-238 (RNSRS) are Cytoplasmic-facing. A helical membrane pass occupies residues 239–259 (ILIGVCFLGVLTLVISWASLG). The Extracellular segment spans residues 260 to 387 (LEFSFAVGAS…LTGLCYDGVE (128 aa)). Cystine bridges form between C272–C382 and C300–C367. A glycan (N-linked (GlcNAc...) asparagine) is linked at N352. Residues 388–408 (GLIYLVLFSFVTALMFSSIVC) form a helical membrane-spanning segment. At 409 to 560 (SVPHTWQSKR…AIHRPHSAIH (152 aa)) the chain is on the cytoplasmic side. 2 disordered regions span residues 415–435 (QSKR…GSRA) and 486–560 (TPRC…SAIH). A compositionally biased stretch (polar residues) spans 539 to 549 (TSRSAPNSRPN).

This sequence belongs to the tweety family. As to quaternary structure, homotetramer; disulfide-linked. Forms cis-homodimers in the presence of Ca(2+).

The protein localises to the cell membrane. It catalyses the reaction chloride(in) = chloride(out). It carries out the reaction L-glutamate(out) = L-glutamate(in). In terms of biological role, may act as a calcium-independent, swelling-dependent volume-regulated anion channel (VRAC-swell) which plays a pivotal role in the process of regulatory volume decrease (RVD) in the brain through the efflux of anions like chloride and organic osmolytes like glutamate. Probable large-conductance Ca(2+)-activated chloride channel. This chain is Protein tweety homolog 3 (ttyh3b), found in Danio rerio (Zebrafish).